A 541-amino-acid chain; its full sequence is Tegument protein UL21 homolog (541 aa).

It belongs to the alphaherpesvirinae UL21 protein family. In terms of assembly, interacts (via C-terminus) with UL16.

It localises to the virion tegument. The protein resides in the host cytoplasm. Its subcellular location is the host nucleus. May participate in DNA packaging/capsid maturation events. Promotes efficient incorporation of tegument proteins UL46, UL49, and US3 homologs into virions. May also play a role in capsid transport to the trans-Golgi network (TGN). This is Tegument protein UL21 homolog from Varicella-zoster virus (strain Oka vaccine) (HHV-3).